A 79-amino-acid chain; its full sequence is Submaxillary gland androgen-regulated protein 3B (79 aa).

The N-terminal stretch at 1 to 22 is a signal peptide; sequence MKSLTWILGLWALAACFTPGES. Residues 19–79 are disordered; sequence PGESQRGPRG…GIFPPPPPQP (61 aa). Gln23 bears the Pyrrolidone carboxylic acid mark. A compositionally biased stretch (pro residues) spans 28 to 79; sequence GPYPPGPLAPPQPFGPGFVPPPPPPPYGPGRIPPPPPAPYGPGIFPPPPPQP.

This sequence belongs to the PROL1/PROL3 family. In terms of processing, P-A and D1A are probably degradation products of P-B. Secreted into saliva by submaxillary gland. Not expressed in heart, brain, lung, liver, skeletal muscle, Kidney, pancreas or placenta.

It is found in the secreted. The protein is Submaxillary gland androgen-regulated protein 3B (SMR3B) of Homo sapiens (Human).